The chain runs to 189 residues: GTP cyclohydrolase 1 (189 aa).

The Zn(2+) site is built by C79, H82, and C150.

Belongs to the GTP cyclohydrolase I family. In terms of assembly, homomer.

It catalyses the reaction GTP + H2O = 7,8-dihydroneopterin 3'-triphosphate + formate + H(+). It participates in cofactor biosynthesis; 7,8-dihydroneopterin triphosphate biosynthesis; 7,8-dihydroneopterin triphosphate from GTP: step 1/1. In Rickettsia africae (strain ESF-5), this protein is GTP cyclohydrolase 1.